The chain runs to 74 residues: U5-theraphotoxin-Cg1a (74 aa).

A signal peptide spans 1–19 (MNATIFALLLLLNLAMYNA). A propeptide spanning residues 20–39 (AEQSSETDMDDTLLIPENYR) is cleaved from the precursor. 3 disulfide bridges follow: cysteine 42–cysteine 56, cysteine 49–cysteine 61, and cysteine 55–cysteine 71.

This sequence belongs to the neurotoxin 36 family. 01 subfamily. As to expression, expressed by the venom gland.

The protein localises to the secreted. Probable ion channel inhibitor. The sequence is that of U5-theraphotoxin-Cg1a from Chilobrachys guangxiensis (Chinese earth tiger tarantula).